The primary structure comprises 673 residues: UvrABC system protein B (673 aa).

The Helicase ATP-binding domain maps to 29 to 188 (EGLNDGLAHQ…LAELQYTRND (160 aa)). 42–49 (GVTGSGKT) is an ATP binding site. The Beta-hairpin motif lies at 95–118 (YYDYYQPEAYVPSSDTFIEKDASI). A Helicase C-terminal domain is found at 434 to 600 (QVDDVLSEIH…ALNKKVGELL (167 aa)). Residues 607-632 (KPKRGKQAVKVEEKSANTYKPKSRKE) form a disordered region. The region spanning 634–669 (EKELKQLEQQMRDFAKDLEFEKAAAVRDKIGQLKAV) is the UVR domain.

The protein belongs to the UvrB family. Forms a heterotetramer with UvrA during the search for lesions. Interacts with UvrC in an incision complex.

It localises to the cytoplasm. Functionally, the UvrABC repair system catalyzes the recognition and processing of DNA lesions. A damage recognition complex composed of 2 UvrA and 2 UvrB subunits scans DNA for abnormalities. Upon binding of the UvrA(2)B(2) complex to a putative damaged site, the DNA wraps around one UvrB monomer. DNA wrap is dependent on ATP binding by UvrB and probably causes local melting of the DNA helix, facilitating insertion of UvrB beta-hairpin between the DNA strands. Then UvrB probes one DNA strand for the presence of a lesion. If a lesion is found the UvrA subunits dissociate and the UvrB-DNA preincision complex is formed. This complex is subsequently bound by UvrC and the second UvrB is released. If no lesion is found, the DNA wraps around the other UvrB subunit that will check the other stand for damage. The protein is UvrABC system protein B of Actinobacillus pleuropneumoniae serotype 5b (strain L20).